The primary structure comprises 794 residues: Cilia- and flagella-associated protein 184 (794 aa).

Disordered regions lie at residues 1–105 and 386–458; these read MASE…VNSE and AHEE…QQDT. The span at 24 to 35 shows a compositional bias: low complexity; that stretch reads QMQQYMMEMQRQ. The span at 49–69 shows a compositional bias: acidic residues; that stretch reads EGYEEGQEGEGYGEEYGDQDY. Basic and acidic residues-rich tracts occupy residues 89–103, 386–411, and 431–445; these read QVNE…RRVN, AHEE…KDYG, and ISDK…HAEQ. Over residues 446–456 the composition is skewed to low complexity; it reads EQNQQAAQQQQ. Coiled-coil stretches lie at residues 461–613 and 638–775; these read NKEI…LRLR and FEQL…ANQI. Positions 774–787 are enriched in polar residues; that stretch reads QISTQNMQSQNNSL. The segment at 774 to 794 is disordered; that stretch reads QISTQNMQSQNNSLKKPYQPY.

Belongs to the CFAP184 family. As to quaternary structure, forms a complex with CFAP263; the interaction is required for functional activity in cilia.

It localises to the cell projection. The protein localises to the cilium. Its function is as follows. In complex with CFAP263, acts as a regulator of ciliary beating that connects radial spoke 3 (RS3) to the inner dynein arm (IDA) and the nexin-dynein regulatory complex (N-DRC). The complex is positioned parallel to N-DRC and forms a connection between the arch at the base of RS3, the IDA tail and N-DRC. The polypeptide is Cilia- and flagella-associated protein 184 (CFAP184) (Tetrahymena thermophila (strain SB210)).